The sequence spans 194 residues: Flagellar transcriptional regulator FlhC (194 aa).

Zn(2+)-binding residues include C139, C142, C159, and C162.

Belongs to the FlhC family. As to quaternary structure, heterohexamer composed of two FlhC and four FlhD subunits. Each FlhC binds a FlhD dimer, forming a heterotrimer, and a hexamer assembles by dimerization of two heterotrimers. Requires Zn(2+) as cofactor.

The protein resides in the cytoplasm. Functionally, functions in complex with FlhD as a master transcriptional regulator that regulates transcription of several flagellar and non-flagellar operons by binding to their promoter region. Activates expression of class 2 flagellar genes, including fliA, which is a flagellum-specific sigma factor that turns on the class 3 genes. Also regulates genes whose products function in a variety of physiological pathways. In Xenorhabdus nematophila (Achromobacter nematophilus), this protein is Flagellar transcriptional regulator FlhC.